The following is a 148-amino-acid chain: uncharacterized protein (148 aa).

The protein belongs to the SufE family.

This is an uncharacterized protein from Rhizobium etli (strain ATCC 51251 / DSM 11541 / JCM 21823 / NBRC 15573 / CFN 42).